A 212-amino-acid chain; its full sequence is Large ribosomal subunit protein bL25 (212 aa).

The disordered stretch occupies residues 183–212 (HDLPVASIHKPKGAKADDAEGEEGEEGGEE). The span at 201–212 (AEGEEGEEGGEE) shows a compositional bias: acidic residues.

It belongs to the bacterial ribosomal protein bL25 family. CTC subfamily. Part of the 50S ribosomal subunit; part of the 5S rRNA/L5/L18/L25 subcomplex. Contacts the 5S rRNA. Binds to the 5S rRNA independently of L5 and L18.

Its function is as follows. This is one of the proteins that binds to the 5S RNA in the ribosome where it forms part of the central protuberance. The chain is Large ribosomal subunit protein bL25 from Marinobacter nauticus (strain ATCC 700491 / DSM 11845 / VT8) (Marinobacter aquaeolei).